A 285-amino-acid chain; its full sequence is NAD kinase (285 aa).

D66 (proton acceptor) is an active-site residue. NAD(+) is bound by residues 66 to 67 (DG), 137 to 138 (ND), R148, R165, D167, and 178 to 183 (TAYSLS).

The protein belongs to the NAD kinase family. The cofactor is a divalent metal cation.

It localises to the cytoplasm. The enzyme catalyses NAD(+) + ATP = ADP + NADP(+) + H(+). Its function is as follows. Involved in the regulation of the intracellular balance of NAD and NADP, and is a key enzyme in the biosynthesis of NADP. Catalyzes specifically the phosphorylation on 2'-hydroxyl of the adenosine moiety of NAD to yield NADP. The sequence is that of NAD kinase from Chlorobium phaeobacteroides (strain BS1).